The sequence spans 245 residues: Pyridoxine 5'-phosphate synthase (245 aa).

Asn-7 provides a ligand contact to 3-amino-2-oxopropyl phosphate. 9-10 lines the 1-deoxy-D-xylulose 5-phosphate pocket; the sequence is DH. Arg-18 serves as a coordination point for 3-amino-2-oxopropyl phosphate. The active-site Proton acceptor is the His-43. 1-deoxy-D-xylulose 5-phosphate-binding residues include Arg-45 and His-50. Residue Glu-70 is the Proton acceptor of the active site. Thr-100 provides a ligand contact to 1-deoxy-D-xylulose 5-phosphate. Residue His-190 is the Proton donor of the active site. Residues Gly-191 and 212–213 each bind 3-amino-2-oxopropyl phosphate; that span reads GH.

Belongs to the PNP synthase family. As to quaternary structure, homooctamer; tetramer of dimers.

The protein resides in the cytoplasm. The catalysed reaction is 3-amino-2-oxopropyl phosphate + 1-deoxy-D-xylulose 5-phosphate = pyridoxine 5'-phosphate + phosphate + 2 H2O + H(+). Its pathway is cofactor biosynthesis; pyridoxine 5'-phosphate biosynthesis; pyridoxine 5'-phosphate from D-erythrose 4-phosphate: step 5/5. Functionally, catalyzes the complicated ring closure reaction between the two acyclic compounds 1-deoxy-D-xylulose-5-phosphate (DXP) and 3-amino-2-oxopropyl phosphate (1-amino-acetone-3-phosphate or AAP) to form pyridoxine 5'-phosphate (PNP) and inorganic phosphate. The chain is Pyridoxine 5'-phosphate synthase from Prochlorococcus marinus (strain MIT 9313).